Here is a 516-residue protein sequence, read N- to C-terminus: Nucleolar complex protein 4 homolog (516 aa).

3 helical membrane passes run 296–316, 347–367, and 375–395; these read SACD…FILI, FFHL…LVAA, and LALT…CNLL.

It belongs to the CBF/MAK21 family.

It is found in the nucleus membrane. The protein localises to the nucleus. Its subcellular location is the nucleolus. The polypeptide is Nucleolar complex protein 4 homolog (Noc4l) (Mus musculus (Mouse)).